Reading from the N-terminus, the 481-residue chain is Glutamate mutase epsilon subunit (481 aa).

An L-glutamate-binding site is contributed by arginine 67. An adenosylcob(III)alamin-binding site is contributed by glycine 69. Arginine 99 is an L-glutamate binding site. Asparagine 122 serves as a coordination point for adenosylcob(III)alamin. L-glutamate contacts are provided by residues 148 to 149 (RH), glutamate 170, and tyrosine 176. Proline 179 provides a ligand contact to adenosylcob(III)alamin. Residue tyrosine 180 participates in L-glutamate binding. Residues phenylalanine 296, lysine 325, glutamate 329, and isoleucine 333 each contribute to the adenosylcob(III)alamin site.

It belongs to the methylaspartate mutase GlmE subunit family. In terms of assembly, heterotetramer composed of 2 epsilon subunits (GlmE) and 2 sigma subunits (GlmS). GlmE exists as a homodimer and GlmS as a monomer. Adenosylcob(III)alamin serves as cofactor.

It carries out the reaction (2S,3S)-3-methyl-L-aspartate = L-glutamate. The protein operates within amino-acid degradation; L-glutamate degradation via mesaconate pathway; acetate and pyruvate from L-glutamate: step 1/4. Its function is as follows. Catalyzes the carbon skeleton rearrangement of L-glutamate to L-threo-3-methylaspartate ((2S,3S)-3-methylaspartate). This Escherichia coli O157:H7 protein is Glutamate mutase epsilon subunit.